The chain runs to 223 residues: Cytidylate kinase (223 aa).

Glycine 10 to threonine 18 contributes to the ATP binding site.

This sequence belongs to the cytidylate kinase family. Type 1 subfamily.

It localises to the cytoplasm. It carries out the reaction CMP + ATP = CDP + ADP. The enzyme catalyses dCMP + ATP = dCDP + ADP. The polypeptide is Cytidylate kinase (Streptococcus pneumoniae (strain 70585)).